The chain runs to 487 residues: 2-aminomuconic semialdehyde dehydrogenase (487 aa).

Residue 231–236 participates in NAD(+) binding; that stretch reads GSQPTA. The active-site Proton acceptor is the Glu253. Cys287 acts as the Nucleophile in catalysis.

The protein belongs to the aldehyde dehydrogenase family.

The protein resides in the cytoplasm. The enzyme catalyses 2-aminomuconate 6-semialdehyde + NAD(+) + H2O = (2Z,4E)-2-aminomuconate + NADH + 2 H(+). It functions in the pathway amino-acid degradation; L-kynurenine degradation. In terms of biological role, catalyzes the NAD-dependent oxidation of 2-aminomuconic semialdehyde of the kynurenine metabolic pathway in L-tryptophan degradation. The protein is 2-aminomuconic semialdehyde dehydrogenase (ALDH8A1) of Bos taurus (Bovine).